Reading from the N-terminus, the 553-residue chain is Putative transport protein PM1071 (553 aa).

5 helical membrane-spanning segments follow: residues 4 to 24 (IAIT…IGHW), 28 to 48 (GVGL…HFTN), 65 to 85 (FGLI…FFAS), 91 to 111 (LKLN…VIVI), and 157 to 177 (MAYA…MWLI). 2 consecutive RCK C-terminal domains span residues 190–276 (KNFL…VLGE) and 277–361 (EVDV…ILGN). A run of 6 helical transmembrane segments spans residues 371-391 (MLPV…PFHI), 403-425 (AGGP…LYWF), 439-459 (IVLF…DTLV), 464-484 (LEWM…VGIV), 496-516 (LCGL…ANAI), and 533-553 (LVMF…WTLL).

This sequence belongs to the AAE transporter (TC 2.A.81) family. YidE subfamily.

Its subcellular location is the cell membrane. In Pasteurella multocida (strain Pm70), this protein is Putative transport protein PM1071.